The chain runs to 681 residues: Mating-type protein beta1-1 (681 aa).

A DNA-binding region (homeobox; TALE-type) is located at residues Asp165–Glu227. Positions Leu307–Ala318 are enriched in basic and acidic residues. Disordered regions lie at residues Leu307–Ser341, Ala353–Cys381, and Ser394–Phe466. Residues Thr413–Thr430 are compositionally biased toward low complexity.

It belongs to the TALE/M-ATYP homeobox family. In terms of assembly, may dimerize.

It is found in the nucleus. Has a major regulatory role in sexual and asexual development. It may bind DNA itself or it may have a role in preventing DNA-binding of another protein. The protein is Mating-type protein beta1-1 of Coprinopsis cinerea (Inky cap fungus).